The primary structure comprises 279 residues: Oxygen-dependent coproporphyrinogen-III oxidase (279 aa).

Residue serine 102 participates in substrate binding. A divalent metal cation-binding residues include histidine 106 and histidine 116. Histidine 116 acts as the Proton donor in catalysis. 118-120 (NTR) is a binding site for substrate. Positions 149 and 179 each coordinate a divalent metal cation. Positions 244–279 (YVEFNLLYDRGTKFGLMTDGNVEAILMSLPPEVKFN) are important for dimerization.

This sequence belongs to the aerobic coproporphyrinogen-III oxidase family. As to quaternary structure, homodimer. A divalent metal cation serves as cofactor.

Its subcellular location is the cytoplasm. The enzyme catalyses coproporphyrinogen III + O2 + 2 H(+) = protoporphyrinogen IX + 2 CO2 + 2 H2O. It participates in porphyrin-containing compound metabolism; protoporphyrin-IX biosynthesis; protoporphyrinogen-IX from coproporphyrinogen-III (O2 route): step 1/1. Functionally, involved in the heme biosynthesis. Catalyzes the aerobic oxidative decarboxylation of propionate groups of rings A and B of coproporphyrinogen-III to yield the vinyl groups in protoporphyrinogen-IX. This is Oxygen-dependent coproporphyrinogen-III oxidase from Rickettsia conorii (strain ATCC VR-613 / Malish 7).